A 312-amino-acid chain; its full sequence is ECF RNA polymerase sigma factor SigJ (312 aa).

The interval 6-65 (FEALRQHLMSVAYRLTGTVADAEDIVQEAWLRWDSPDTVIADPRAWLTTVVSRLGLDKLR) is sigma-70 factor domain-2. A Polymerase core binding motif is present at residues 29 to 32 (DIVQ). The interval 107–155 (MVVLERLRPDQRVAFVLHDGFAVPFAEVAEVLGTSEAAARQLASRARKA) is sigma-70 factor domain-4. The H-T-H motif DNA-binding region spans 131–150 (FAEVAEVLGTSEAAARQLAS). The tract at residues 293–312 (GSPLKERRAQPTGRGRHHRN) is disordered.

Belongs to the sigma-70 factor family. ECF subfamily. As to quaternary structure, interacts transiently with the RNA polymerase catalytic core formed by RpoA, RpoB, RpoC and RpoZ (2 alpha, 1 beta, 1 beta' and 1 omega subunit) to form the RNA polymerase holoenzyme that can initiate transcription.

Sigma factors are initiation factors that promote the attachment of RNA polymerase to specific initiation sites and are then released. Extracytoplasmic function (ECF) sigma factors are held in an inactive form by an anti-sigma factor until released, although no anti-sigma factor is known for this protein. Regulates the promoter of SigI, may not be autoregulated. The protein is ECF RNA polymerase sigma factor SigJ (sigJ) of Mycobacterium tuberculosis (strain ATCC 25618 / H37Rv).